The primary structure comprises 88 residues: Small ribosomal subunit protein uS15 (88 aa).

It belongs to the universal ribosomal protein uS15 family. Part of the 30S ribosomal subunit. Forms a bridge to the 50S subunit in the 70S ribosome, contacting the 23S rRNA.

Functionally, one of the primary rRNA binding proteins, it binds directly to 16S rRNA where it helps nucleate assembly of the platform of the 30S subunit by binding and bridging several RNA helices of the 16S rRNA. Forms an intersubunit bridge (bridge B4) with the 23S rRNA of the 50S subunit in the ribosome. This is Small ribosomal subunit protein uS15 from Francisella tularensis subsp. tularensis (strain FSC 198).